Here is a 55-residue protein sequence, read N- to C-terminus: Large ribosomal subunit protein bL33 (55 aa).

It belongs to the bacterial ribosomal protein bL33 family.

This is Large ribosomal subunit protein bL33 from Methylorubrum extorquens (strain CM4 / NCIMB 13688) (Methylobacterium extorquens).